The primary structure comprises 600 residues: Adenine deaminase (600 aa).

This sequence belongs to the metallo-dependent hydrolases superfamily. Adenine deaminase family. Requires Mn(2+) as cofactor.

It catalyses the reaction adenine + H2O + H(+) = hypoxanthine + NH4(+). The polypeptide is Adenine deaminase (Roseobacter denitrificans (strain ATCC 33942 / OCh 114) (Erythrobacter sp. (strain OCh 114))).